The primary structure comprises 640 residues: tRNA-dihydrouridine(47) synthase [NAD(P)(+)]-like (640 aa).

Residues 1-11 show a composition bias toward polar residues; it reads MAESEGSNTEN. Disordered regions lie at residues 1–23 and 43–123; these read MAES…ENLD and FIDA…HSQF. Basic and acidic residues predominate over residues 43 to 57; sequence FIDADGKDVTEKETC. Over residues 58–72 the composition is skewed to polar residues; that stretch reads SELSLNDAENTTRTE. Residues 77–86 show a composition bias toward basic and acidic residues; that stretch reads PEAKRIKLDD. Residues 104–120 are compositionally biased toward basic residues; it reads EKKRARGQNKSRPHMKH. C3H1-type zinc fingers lie at residues 123–153 and 161–191; these read FEEN…HDVA and EDIR…HLGE. FMN-binding positions include 301–303 and Gln355; that span reads PLT. The active-site Proton donor is Cys386. Residues Lys425, His455, 487–489, and 510–511 each bind FMN; these read NGD and AR.

The protein belongs to the Dus family. Dus3 subfamily. The cofactor is FMN.

The enzyme catalyses 5,6-dihydrouridine(47) in tRNA + NAD(+) = uridine(47) in tRNA + NADH + H(+). It catalyses the reaction 5,6-dihydrouridine(47) in tRNA + NADP(+) = uridine(47) in tRNA + NADPH + H(+). The catalysed reaction is a 5,6-dihydrouridine in mRNA + NAD(+) = a uridine in mRNA + NADH + H(+). It carries out the reaction a 5,6-dihydrouridine in mRNA + NADP(+) = a uridine in mRNA + NADPH + H(+). Functionally, catalyzes the synthesis of dihydrouridine, a modified base, in various RNAs, such as tRNAs, mRNAs and some long non-coding RNAs (lncRNAs). Mainly modifies the uridine in position 47 (U47) in the D-loop of most cytoplasmic tRNAs. Also able to mediate the formation of dihydrouridine in some mRNAs, thereby regulating their translation. The sequence is that of tRNA-dihydrouridine(47) synthase [NAD(P)(+)]-like (dus3l) from Xenopus laevis (African clawed frog).